Consider the following 199-residue polypeptide: Prolactin (199 aa).

The cysteines at positions 4 and 11 are disulfide-linked. A phosphoserine mark is found at serine 26, serine 34, and serine 90. Disulfide bonds link cysteine 58–cysteine 174 and cysteine 191–cysteine 199.

It belongs to the somatotropin/prolactin family. In terms of assembly, interacts with PRLR.

The protein localises to the secreted. Its function is as follows. Prolactin acts primarily on the mammary gland by promoting lactation. In Balaenoptera borealis (Sei whale), this protein is Prolactin (PRL).